The primary structure comprises 89 residues: MACPLDQAIGLLVAIFHKYSGKEGDKHTLSKKELKELIQKELTIGSKLQDAEIARLMDDLDRNKDQEVNFQEYVAFLGALALIYNEALK.

2 consecutive EF-hand domains span residues 12-47 and 48-83; these read LVAI…IGSK and LQDA…LALI. Residues threonine 28 and glutamate 33 each coordinate Ca(2+). An N6-acetyllysine modification is found at lysine 40. Serine 46 is subject to Phosphoserine. Position 47 is an N6-acetyllysine; alternate (lysine 47). The residue at position 47 (lysine 47) is an N6-succinyllysine; alternate. Residues aspartate 61, asparagine 63, aspartate 65, glutamate 67, and glutamate 72 each coordinate Ca(2+).

This sequence belongs to the S-100 family. Homodimer; head to tail assembly of 2 subunits. Interacts with CACYBP in a calcium-dependent manner. Interacts with ANXA2 and ANXA11 (via N-terminus). Interacts with SUGT1. Interacts with TP53; has higher affinity for TP53 that is phosphorylated on its N-terminal domain, and lower affinity for TP53 that is phosphorylated on its C-terminal domain. Interacts with tropomyosin. Interacts with FKBP4. Interacts with PPP5C (via TPR repeats); the interaction is calcium-dependent and modulates PPP5C activity. Interacts with TPPP; this interaction inhibits TPPP dimerization.

It localises to the nucleus envelope. It is found in the cytoplasm. The protein resides in the cell membrane. In terms of biological role, may function as calcium sensor and modulator, contributing to cellular calcium signaling. May function by interacting with other proteins, such as TPR-containing proteins, and indirectly play a role in many physiological processes such as the reorganization of the actin cytoskeleton and in cell motility. Binds 2 calcium ions. Calcium binding is cooperative. In Mus musculus (Mouse), this protein is Protein S100-A6 (S100a6).